The sequence spans 441 residues: tRNA modification GTPase MnmE (441 aa).

(6S)-5-formyl-5,6,7,8-tetrahydrofolate-binding residues include R21, E78, and K117. The region spanning 211–363 is the TrmE-type G domain; sequence GIVMTIVGKP…LENKIVSKVK (153 aa). N221 provides a ligand contact to K(+). Residues 221-226, 240-246, and 265-268 each bind GTP; these read NSGKST, TDIPGTT, and DTAG. S225 is a Mg(2+) binding site. Positions 240, 242, and 245 each coordinate K(+). T246 is a binding site for Mg(2+). K441 serves as a coordination point for (6S)-5-formyl-5,6,7,8-tetrahydrofolate.

It belongs to the TRAFAC class TrmE-Era-EngA-EngB-Septin-like GTPase superfamily. TrmE GTPase family. In terms of assembly, homodimer. Heterotetramer of two MnmE and two MnmG subunits. Requires K(+) as cofactor.

It is found in the cytoplasm. In terms of biological role, exhibits a very high intrinsic GTPase hydrolysis rate. Involved in the addition of a carboxymethylaminomethyl (cmnm) group at the wobble position (U34) of certain tRNAs, forming tRNA-cmnm(5)s(2)U34. The polypeptide is tRNA modification GTPase MnmE (Thermosipho melanesiensis (strain DSM 12029 / CIP 104789 / BI429)).